We begin with the raw amino-acid sequence, 326 residues long: N-acetyl-gamma-glutamyl-phosphate reductase (326 aa).

Cysteine 155 is a catalytic residue.

The protein belongs to the NAGSA dehydrogenase family. Type 1 subfamily.

The protein resides in the cytoplasm. The catalysed reaction is N-acetyl-L-glutamate 5-semialdehyde + phosphate + NADP(+) = N-acetyl-L-glutamyl 5-phosphate + NADPH + H(+). The protein operates within amino-acid biosynthesis; L-arginine biosynthesis; N(2)-acetyl-L-ornithine from L-glutamate: step 3/4. Its function is as follows. Catalyzes the NADPH-dependent reduction of N-acetyl-5-glutamyl phosphate to yield N-acetyl-L-glutamate 5-semialdehyde. The chain is N-acetyl-gamma-glutamyl-phosphate reductase from Shewanella oneidensis (strain ATCC 700550 / JCM 31522 / CIP 106686 / LMG 19005 / NCIMB 14063 / MR-1).